The chain runs to 619 residues: Chaperone protein HscA homolog (619 aa).

Belongs to the heat shock protein 70 family.

Chaperone involved in the maturation of iron-sulfur cluster-containing proteins. Has a low intrinsic ATPase activity which is markedly stimulated by HscB. The chain is Chaperone protein HscA homolog from Chromobacterium violaceum (strain ATCC 12472 / DSM 30191 / JCM 1249 / CCUG 213 / NBRC 12614 / NCIMB 9131 / NCTC 9757 / MK).